A 492-amino-acid chain; its full sequence is Thyroid hormone receptor alpha (492 aa).

The disordered stretch occupies residues 1–33 (MEQKPSKVECGSDPEENSARSPDGKRKRKNGQC). Residues 1–52 (MEQKPSKVECGSDPEENSARSPDGKRKRKNGQCPLKSSMSGYIPSYLDKDEQ) are modulating. Positions 53, 56, 70, 73, 91, 97, 107, and 110 each coordinate Zn(2+). 2 consecutive NR C4-type zinc fingers follow at residues 53–73 (CVVC…CEGC) and 91–115 (CKYD…FKKC). Residues 53–127 (CVVCGDKATG…VGMAMDLVLD (75 aa)) constitute a DNA-binding region (nuclear receptor). Residues 163-407 (EEWDLIHVAT…EGQQLLGMHV (245 aa)) form the NR LBD domain. 3,3',5-triiodo-L-thyronine contacts are provided by R228 and S277. The tract at residues 457–492 (AVCGEDDSSEASSLSSSSSDEDTEVFEDLAGKAASP) is disordered.

This sequence belongs to the nuclear hormone receptor family. NR1 subfamily. As to quaternary structure, binds DNA as a dimer; homodimer and heterodimer with RXRB. Interacts with NCOA3 and NCOA6 coactivators, leading to a strong increase of transcription of target genes. Probably interacts with SFPQ. Interacts with C1D. Interacts with AKAP13. Interacts with TP53INP2. Interacts with PER2. Isoform alpha-2 and isoform alpha-1 interact with TACC1, but the interaction with alpha-1 is weaker. The interaction with isoform alpha-1, but not alpha-2, is decreased in the presence of thyroid hormone T3.

It localises to the nucleus. It is found in the cytoplasm. Functionally, nuclear hormone receptor that can act as a repressor or activator of transcription. High affinity receptor for thyroid hormones, including triiodothyronine and thyroxine. This is Thyroid hormone receptor alpha (Thra) from Rattus norvegicus (Rat).